The chain runs to 274 residues: Rhamnulose-1-phosphate aldolase (274 aa).

Glu117 is an active-site residue. Zn(2+) is bound by residues His141, His143, and His212.

The protein belongs to the aldolase class II family. RhaD subfamily. Homotetramer. The cofactor is Zn(2+).

The protein localises to the cytoplasm. It catalyses the reaction L-rhamnulose 1-phosphate = (S)-lactaldehyde + dihydroxyacetone phosphate. The protein operates within carbohydrate degradation; L-rhamnose degradation; glycerone phosphate from L-rhamnose: step 3/3. Its function is as follows. Catalyzes the reversible cleavage of L-rhamnulose-1-phosphate to dihydroxyacetone phosphate (DHAP) and L-lactaldehyde. The chain is Rhamnulose-1-phosphate aldolase from Escherichia coli (strain SMS-3-5 / SECEC).